We begin with the raw amino-acid sequence, 557 residues long: TBCC domain-containing protein 1 (557 aa).

The C-CAP/cofactor C-like domain maps to 290–435; it reads TTKRAKIACN…LEDHMARTGL (146 aa).

The protein belongs to the TBCC family.

It localises to the cytoplasm. Its subcellular location is the cytoskeleton. The protein localises to the microtubule organizing center. The protein resides in the centrosome. It is found in the spindle pole. In terms of biological role, plays a role in the regulation of centrosome and Golgi apparatus positioning, with consequences on cell shape and cell migration. This is TBCC domain-containing protein 1 (TBCCD1) from Bos taurus (Bovine).